A 119-amino-acid chain; its full sequence is Phosphoribosyl-AMP cyclohydrolase (119 aa).

D77 serves as a coordination point for Mg(2+). C78 is a binding site for Zn(2+). 2 residues coordinate Mg(2+): D79 and D81. Zn(2+) contacts are provided by C94 and C101.

Belongs to the PRA-CH family. As to quaternary structure, homodimer. Requires Mg(2+) as cofactor. It depends on Zn(2+) as a cofactor.

The protein localises to the cytoplasm. It catalyses the reaction 1-(5-phospho-beta-D-ribosyl)-5'-AMP + H2O = 1-(5-phospho-beta-D-ribosyl)-5-[(5-phospho-beta-D-ribosylamino)methylideneamino]imidazole-4-carboxamide. It participates in amino-acid biosynthesis; L-histidine biosynthesis; L-histidine from 5-phospho-alpha-D-ribose 1-diphosphate: step 3/9. Its function is as follows. Catalyzes the hydrolysis of the adenine ring of phosphoribosyl-AMP. The sequence is that of Phosphoribosyl-AMP cyclohydrolase from Cereibacter sphaeroides (strain KD131 / KCTC 12085) (Rhodobacter sphaeroides).